We begin with the raw amino-acid sequence, 424 residues long: COUP transcription factor 1 (424 aa).

Positions 1–82 (MAMVVSSWRD…QGPPGSGQSQ (82 aa)) are disordered. Positions 39–68 (EQQQQQAGSGAPHTPQTPGQPGAPATPGTA) are enriched in low complexity. Residues 84-159 (HIECVVCGDK…VGMRREAVQR (76 aa)) constitute a DNA-binding region (nuclear receptor). NR C4-type zinc fingers lie at residues 87–107 (CVVCGDKSSGKHYGQFTCEGC) and 123–147 (CRANRNCPIDQHHRNQCQYCRLKKC). An NR LBD domain is found at 185 to 411 (YLSGYISLLL…TLIRDMLLSG (227 aa)).

This sequence belongs to the nuclear hormone receptor family. NR2 subfamily. In terms of assembly, binds DNA as dimer; homodimer and probable heterodimer with NR2F6. Interacts with GTF2B; this interaction is direct. Interacts with COPS2.

The protein localises to the nucleus. Coup (chicken ovalbumin upstream promoter) transcription factor binds to the ovalbumin promoter and, in conjunction with another protein (S300-II) stimulates initiation of transcription. Binds to both direct repeats and palindromes of the 5'-AGGTCA-3' motif. Represses transcriptional activity of LHCG. The sequence is that of COUP transcription factor 1 (NR2F1) from Bos taurus (Bovine).